The following is a 198-amino-acid chain: tRNA (pseudouridine(54)-N(1))-methyltransferase (198 aa).

Leu-128 is a binding site for S-adenosyl-L-methionine.

The protein belongs to the methyltransferase superfamily. TrmY family. As to quaternary structure, homodimer.

The protein resides in the cytoplasm. It catalyses the reaction pseudouridine(54) in tRNA + S-adenosyl-L-methionine = N(1)-methylpseudouridine(54) in tRNA + S-adenosyl-L-homocysteine + H(+). Its function is as follows. Specifically catalyzes the N1-methylation of pseudouridine at position 54 (Psi54) in tRNAs. This chain is tRNA (pseudouridine(54)-N(1))-methyltransferase, found in Haloferax volcanii (strain ATCC 29605 / DSM 3757 / JCM 8879 / NBRC 14742 / NCIMB 2012 / VKM B-1768 / DS2) (Halobacterium volcanii).